A 473-amino-acid polypeptide reads, in one-letter code: Photosystem II CP43 reaction center protein (473 aa).

Positions 1–14 (MKTLYSLRRFYPVE) are excised as a propeptide. Thr-15 bears the N-acetylthreonine mark. Thr-15 bears the Phosphothreonine mark. The next 5 helical transmembrane spans lie at 69–93 (LFEVAHFVPEKPMYEQGFILLPHLA), 134–155 (LLGPETLEESFPFFGYVWKDRN), 178–200 (KALSFGGVYDTWAPGGGDVRKIT), 255–275 (KPFAWARRALVWSGEAYLSYS), and 291–312 (WFNNTAYPSEFYGPTGPEASQA). [CaMn4O5] cluster is bound at residue Glu-367. Residues 447 to 471 (RARAAAAGFEKGIDRDFEPVLSMTP) form a helical membrane-spanning segment.

The protein belongs to the PsbB/PsbC family. PsbC subfamily. In terms of assembly, PSII is composed of 1 copy each of membrane proteins PsbA, PsbB, PsbC, PsbD, PsbE, PsbF, PsbH, PsbI, PsbJ, PsbK, PsbL, PsbM, PsbT, PsbX, PsbY, PsbZ, Psb30/Ycf12, at least 3 peripheral proteins of the oxygen-evolving complex and a large number of cofactors. It forms dimeric complexes. The cofactor is Binds multiple chlorophylls and provides some of the ligands for the Ca-4Mn-5O cluster of the oxygen-evolving complex. It may also provide a ligand for a Cl- that is required for oxygen evolution. PSII binds additional chlorophylls, carotenoids and specific lipids..

Its subcellular location is the plastid. The protein localises to the chloroplast thylakoid membrane. In terms of biological role, one of the components of the core complex of photosystem II (PSII). It binds chlorophyll and helps catalyze the primary light-induced photochemical processes of PSII. PSII is a light-driven water:plastoquinone oxidoreductase, using light energy to abstract electrons from H(2)O, generating O(2) and a proton gradient subsequently used for ATP formation. This Pelargonium hortorum (Common geranium) protein is Photosystem II CP43 reaction center protein.